Here is a 119-residue protein sequence, read N- to C-terminus: Protein yippee-like 1 (119 aa).

The Yippee domain occupies 19–116 (RTYSCIHCRA…IELAHMIKDN (98 aa)). Positions 23, 26, 79, and 82 each coordinate Zn(2+). The Nuclear localization signal signature appears at 99–104 (KYKEGK).

It belongs to the yippee family.

The protein localises to the nucleus. In terms of biological role, may play a role in epithelioid conversion of fibroblasts. The chain is Protein yippee-like 1 (YPEL1) from Chlorocebus aethiops (Green monkey).